Consider the following 97-residue polypeptide: Small ribosomal subunit protein bS6 (97 aa).

Belongs to the bacterial ribosomal protein bS6 family.

In terms of biological role, binds together with bS18 to 16S ribosomal RNA. The chain is Small ribosomal subunit protein bS6 from Bifidobacterium longum (strain NCC 2705).